The following is a 126-amino-acid chain: uncharacterized protein (126 aa).

The Extracellular portion of the chain corresponds to 1 to 9 (MCTYIITQS). A helical transmembrane segment spans residues 10-30 (FFFLPCLSFLFFKLVGFFDSV). Residues 31-73 (FTAGKSLRIMFELPIFDKLTSCFAAIDCSATSLDIPFAEEELF) are Cytoplasmic-facing. The helical transmembrane segment at 74 to 94 (LMLVSEPVLIPFLFVFEFMLI) threads the bilayer. Over 95 to 126 (CKPCGSRSRFGFPVKNVSDFEETLEFDPTLLV) the chain is Extracellular.

It is found in the membrane. This is an uncharacterized protein from Saccharomyces cerevisiae (strain ATCC 204508 / S288c) (Baker's yeast).